Here is a 385-residue protein sequence, read N- to C-terminus: Succinate--CoA ligase [ADP-forming] subunit beta (385 aa).

In terms of domain architecture, ATP-grasp spans 9 to 244 (KEILRKYGVP…QDEEDPLETR (236 aa)). ATP contacts are provided by residues Lys-46, 53-55 (GRG), Glu-99, Cys-102, and Glu-107. Mg(2+)-binding residues include Asn-199 and Asp-213. Substrate-binding positions include Asn-264 and 321 to 323 (GIM).

The protein belongs to the succinate/malate CoA ligase beta subunit family. Heterotetramer of two alpha and two beta subunits. The cofactor is Mg(2+).

The catalysed reaction is succinate + ATP + CoA = succinyl-CoA + ADP + phosphate. It catalyses the reaction GTP + succinate + CoA = succinyl-CoA + GDP + phosphate. Its pathway is carbohydrate metabolism; tricarboxylic acid cycle; succinate from succinyl-CoA (ligase route): step 1/1. In terms of biological role, succinyl-CoA synthetase functions in the citric acid cycle (TCA), coupling the hydrolysis of succinyl-CoA to the synthesis of either ATP or GTP and thus represents the only step of substrate-level phosphorylation in the TCA. The beta subunit provides nucleotide specificity of the enzyme and binds the substrate succinate, while the binding sites for coenzyme A and phosphate are found in the alpha subunit. This Rickettsia bellii (strain RML369-C) protein is Succinate--CoA ligase [ADP-forming] subunit beta.